The following is a 139-amino-acid chain: Large ribosomal subunit protein uL16 (139 aa).

The segment covering 1-17 has biased composition (basic residues); the sequence is MLIPRKVKHRKQHHPGR. The tract at residues 1–24 is disordered; the sequence is MLIPRKVKHRKQHHPGRTGHATGG.

The protein belongs to the universal ribosomal protein uL16 family. In terms of assembly, part of the 50S ribosomal subunit.

Functionally, binds 23S rRNA and is also seen to make contacts with the A and possibly P site tRNAs. The chain is Large ribosomal subunit protein uL16 from Clavibacter michiganensis subsp. michiganensis (strain NCPPB 382).